A 211-amino-acid polypeptide reads, in one-letter code: Small ribosomal subunit protein eS1 (211 aa).

It belongs to the eukaryotic ribosomal protein eS1 family.

The chain is Small ribosomal subunit protein eS1 from Archaeoglobus fulgidus (strain ATCC 49558 / DSM 4304 / JCM 9628 / NBRC 100126 / VC-16).